The chain runs to 272 residues: Ribosomal RNA small subunit methyltransferase A (272 aa).

S-adenosyl-L-methionine contacts are provided by His13, Leu15, Gly40, Glu61, Asp85, and Asn105.

It belongs to the class I-like SAM-binding methyltransferase superfamily. rRNA adenine N(6)-methyltransferase family. RsmA subfamily.

The protein localises to the cytoplasm. It catalyses the reaction adenosine(1518)/adenosine(1519) in 16S rRNA + 4 S-adenosyl-L-methionine = N(6)-dimethyladenosine(1518)/N(6)-dimethyladenosine(1519) in 16S rRNA + 4 S-adenosyl-L-homocysteine + 4 H(+). In terms of biological role, specifically dimethylates two adjacent adenosines (A1518 and A1519) in the loop of a conserved hairpin near the 3'-end of 16S rRNA in the 30S particle. May play a critical role in biogenesis of 30S subunits. The chain is Ribosomal RNA small subunit methyltransferase A from Bacteroides fragilis (strain ATCC 25285 / DSM 2151 / CCUG 4856 / JCM 11019 / LMG 10263 / NCTC 9343 / Onslow / VPI 2553 / EN-2).